The sequence spans 138 residues: Proline-rich protein 34 (138 aa).

A compositionally biased stretch (pro residues) spans 22–37 (SAPTSPPNPATRPAPG). 2 disordered regions span residues 22 to 55 (SAPT…PTRG) and 81 to 107 (APRL…SPAR).

The protein is Proline-rich protein 34 (PRR34) of Homo sapiens (Human).